The sequence spans 348 residues: Autophagy-related protein 27 (348 aa).

The first 20 residues, 1-20 (MYRPDLLAFLLPLLAAPVFS), serve as a signal peptide directing secretion. Residues 21-274 (AETLDCGKIR…DDGGDNSSSH (254 aa)) lie on the Lumenal side of the membrane. Residues 24 to 255 (LDCGKIRADG…TWHTKYACEK (232 aa)) form the MRH domain. 3 disulfides stabilise this stretch: C26–C69, C82–C89, and C175–C253. N61 and N84 each carry an N-linked (GlcNAc...) asparagine glycan. Basic and acidic residues predominate over residues 180–208 (EGTEGEWVSEEKYEKRADEKKDDDKKEDG). The tract at residues 180–219 (EGTEGEWVSEEKYEKRADEKKDDDKKEDGGDKDEGESTLE) is disordered. Residues N226 and N270 are each glycosylated (N-linked (GlcNAc...) asparagine). The helical transmembrane segment at 275 to 295 (WGFFTWFVLIAFLLIAGYLIF) threads the bilayer. Topologically, residues 296–348 (SSWINFTRYGARGWDLLPHSDTIRDIPYLLKDFIRRILNTVQGTGSRGGYSAV) are cytoplasmic.

The protein belongs to the ATG27 family. In terms of assembly, forms a complex with ATG9 and ATG23.

It localises to the cytoplasmic vesicle membrane. The protein localises to the golgi apparatus membrane. It is found in the mitochondrion membrane. The protein resides in the preautophagosomal structure membrane. In terms of biological role, effector of VPS34 phosphatidylinositol 3-phosphate kinase signaling. Regulates the cytoplasm to vacuole transport (Cvt) vesicle formation. Plays a role in ATG protein retrieval from the pre-autophagosomal structure (PAS) and is especially required for autophagy-dependent cycling of ATG9. Autophagy is required for proper vegetative growth, asexual/sexual reproduction, and full virulence. Autophagy is particularly involved in the biosynthesis of deoxynivalenol (DON), an important virulence determinant. This Gibberella zeae (strain ATCC MYA-4620 / CBS 123657 / FGSC 9075 / NRRL 31084 / PH-1) (Wheat head blight fungus) protein is Autophagy-related protein 27.